Reading from the N-terminus, the 619-residue chain is Dihydroxy-acid dehydratase (619 aa).

A Mg(2+)-binding site is contributed by aspartate 81. Cysteine 122 lines the [2Fe-2S] cluster pocket. The Mg(2+) site is built by aspartate 123 and lysine 124. Position 124 is an N6-carboxylysine (lysine 124). [2Fe-2S] cluster is bound at residue cysteine 201. Residue glutamate 496 coordinates Mg(2+). The Proton acceptor role is filled by serine 522.

It belongs to the IlvD/Edd family. As to quaternary structure, homodimer. It depends on [2Fe-2S] cluster as a cofactor. The cofactor is Mg(2+).

It carries out the reaction (2R)-2,3-dihydroxy-3-methylbutanoate = 3-methyl-2-oxobutanoate + H2O. It catalyses the reaction (2R,3R)-2,3-dihydroxy-3-methylpentanoate = (S)-3-methyl-2-oxopentanoate + H2O. It functions in the pathway amino-acid biosynthesis; L-isoleucine biosynthesis; L-isoleucine from 2-oxobutanoate: step 3/4. Its pathway is amino-acid biosynthesis; L-valine biosynthesis; L-valine from pyruvate: step 3/4. Functions in the biosynthesis of branched-chain amino acids. Catalyzes the dehydration of (2R,3R)-2,3-dihydroxy-3-methylpentanoate (2,3-dihydroxy-3-methylvalerate) into 2-oxo-3-methylpentanoate (2-oxo-3-methylvalerate) and of (2R)-2,3-dihydroxy-3-methylbutanoate (2,3-dihydroxyisovalerate) into 2-oxo-3-methylbutanoate (2-oxoisovalerate), the penultimate precursor to L-isoleucine and L-valine, respectively. The chain is Dihydroxy-acid dehydratase from Paracidovorax citrulli (strain AAC00-1) (Acidovorax citrulli).